A 75-amino-acid chain; its full sequence is Sec-independent protein translocase protein TatA (75 aa).

The chain crosses the membrane as a helical span at residues 1–21 (MGSFSIWHWLVVLAIVLLVFG). The disordered stretch occupies residues 41–75 (KGMRDEDKPNAQLGDESRTQDASRTAQDEHDRNAR).

This sequence belongs to the TatA/E family. The Tat system comprises two distinct complexes: a TatABC complex, containing multiple copies of TatA, TatB and TatC subunits, and a separate TatA complex, containing only TatA subunits. Substrates initially bind to the TatABC complex, which probably triggers association of the separate TatA complex to form the active translocon.

The protein localises to the cell inner membrane. Part of the twin-arginine translocation (Tat) system that transports large folded proteins containing a characteristic twin-arginine motif in their signal peptide across membranes. TatA could form the protein-conducting channel of the Tat system. The chain is Sec-independent protein translocase protein TatA from Stenotrophomonas maltophilia (strain K279a).